Reading from the N-terminus, the 229-residue chain is Large ribosomal subunit protein uL1 (229 aa).

This sequence belongs to the universal ribosomal protein uL1 family. In terms of assembly, part of the 50S ribosomal subunit.

Binds directly to 23S rRNA. The L1 stalk is quite mobile in the ribosome, and is involved in E site tRNA release. In terms of biological role, protein L1 is also a translational repressor protein, it controls the translation of the L11 operon by binding to its mRNA. In Mannheimia succiniciproducens (strain KCTC 0769BP / MBEL55E), this protein is Large ribosomal subunit protein uL1.